Consider the following 215-residue polypeptide: Redox-sensing transcriptional repressor Rex (215 aa).

The segment at residues 18-57 is a DNA-binding region (H-T-H motif); sequence LYYRFLKNLHASGKQRVSSAELSDAVKVDSATIRRDFSYF. 92-97 contacts NAD(+); it reads GVGNLG.

The protein belongs to the transcriptional regulatory Rex family. As to quaternary structure, homodimer.

The protein resides in the cytoplasm. Modulates transcription in response to changes in cellular NADH/NAD(+) redox state. This chain is Redox-sensing transcriptional repressor Rex, found in Bacillus subtilis (strain 168).